Here is a 481-residue protein sequence, read N- to C-terminus: Glutamyl-tRNA(Gln) amidotransferase subunit A (481 aa).

Active-site charge relay system residues include K74 and S149. The active-site Acyl-ester intermediate is S173.

This sequence belongs to the amidase family. GatA subfamily. Heterotrimer of A, B and C subunits.

It catalyses the reaction L-glutamyl-tRNA(Gln) + L-glutamine + ATP + H2O = L-glutaminyl-tRNA(Gln) + L-glutamate + ADP + phosphate + H(+). Functionally, allows the formation of correctly charged Gln-tRNA(Gln) through the transamidation of misacylated Glu-tRNA(Gln) in organisms which lack glutaminyl-tRNA synthetase. The reaction takes place in the presence of glutamine and ATP through an activated gamma-phospho-Glu-tRNA(Gln). The chain is Glutamyl-tRNA(Gln) amidotransferase subunit A from Francisella tularensis subsp. tularensis (strain FSC 198).